The sequence spans 431 residues: Aspartokinase (431 aa).

The protein belongs to the aspartokinase family.

The enzyme catalyses L-aspartate + ATP = 4-phospho-L-aspartate + ADP. The protein operates within amino-acid biosynthesis; L-lysine biosynthesis via DAP pathway; (S)-tetrahydrodipicolinate from L-aspartate: step 1/4. It functions in the pathway amino-acid biosynthesis; L-methionine biosynthesis via de novo pathway; L-homoserine from L-aspartate: step 1/3. It participates in amino-acid biosynthesis; L-threonine biosynthesis; L-threonine from L-aspartate: step 1/5. The polypeptide is Aspartokinase (lysC) (Chlamydia trachomatis serovar D (strain ATCC VR-885 / DSM 19411 / UW-3/Cx)).